A 245-amino-acid polypeptide reads, in one-letter code: NADH-quinone oxidoreductase subunit C (245 aa).

Positions 1-10 (MNAPQDRTDD) are enriched in basic and acidic residues. 2 disordered regions span residues 1 to 54 (MNAP…GYGG) and 217 to 245 (QRKD…RSYQ). Residues 11–28 (GGVPVPVTPAGATGGAPA) are compositionally biased toward low complexity. Residues 39-54 (GMFGDQGTGDVSGYGG) are compositionally biased toward gly residues.

Belongs to the complex I 30 kDa subunit family. As to quaternary structure, NDH-1 is composed of 14 different subunits. Subunits NuoB, C, D, E, F, and G constitute the peripheral sector of the complex.

It localises to the cell membrane. It carries out the reaction a quinone + NADH + 5 H(+)(in) = a quinol + NAD(+) + 4 H(+)(out). NDH-1 shuttles electrons from NADH, via FMN and iron-sulfur (Fe-S) centers, to quinones in the respiratory chain. The immediate electron acceptor for the enzyme in this species is believed to be a menaquinone. Couples the redox reaction to proton translocation (for every two electrons transferred, four hydrogen ions are translocated across the cytoplasmic membrane), and thus conserves the redox energy in a proton gradient. In Salinispora arenicola (strain CNS-205), this protein is NADH-quinone oxidoreductase subunit C.